The sequence spans 198 residues: MKQPSALSALVEALRVLPGVGPKSAQRMAVHLMQHDREGAERLGRSLLFATEHLQHCEKCNTFTEAQICEVCSDEERDPTLLCVVETPADQIMLEQTMTYRGLYFVLMGRLSPLDGIGPKEIHFDRLVRRASDGVVKEVVLATNFTNEGEATAHYLGQTLKARGLAVTRLARGVPVGGELEYVDAGTIARAMLDRRTM.

The C4-type zinc finger occupies 57–72 (CEKCNTFTEAQICEVC). The Toprim domain occupies 80–175 (TLLCVVETPA…AVTRLARGVP (96 aa)).

This sequence belongs to the RecR family.

May play a role in DNA repair. It seems to be involved in an RecBC-independent recombinational process of DNA repair. It may act with RecF and RecO. This Burkholderia cenocepacia (strain HI2424) protein is Recombination protein RecR.